Reading from the N-terminus, the 419-residue chain is Pyrophosphate--fructose 6-phosphate 1-phosphotransferase (419 aa).

Gly-12 provides a ligand contact to diphosphate. A Mg(2+)-binding site is contributed by Asp-107. Substrate-binding positions include 132 to 134 (TID), 178 to 180 (MGR), Glu-238, and 300 to 303 (YELR). Catalysis depends on Asp-134, which acts as the Proton acceptor.

This sequence belongs to the phosphofructokinase type A (PFKA) family. PPi-dependent PFK group II subfamily. Clade 'Short' sub-subfamily. In terms of assembly, homodimer. Requires Mg(2+) as cofactor. Co(2+) is required as a cofactor. Mn(2+) serves as cofactor. It depends on Ni(2+) as a cofactor.

Its subcellular location is the cytoplasm. The enzyme catalyses beta-D-fructose 6-phosphate + diphosphate = beta-D-fructose 1,6-bisphosphate + phosphate + H(+). Its pathway is carbohydrate degradation; glycolysis; D-glyceraldehyde 3-phosphate and glycerone phosphate from D-glucose: step 3/4. Non-allosteric. Functionally, catalyzes the phosphorylation of D-fructose 6-phosphate, the first committing step of glycolysis. Uses inorganic phosphate (PPi) as phosphoryl donor instead of ATP like common ATP-dependent phosphofructokinases (ATP-PFKs), which renders the reaction reversible, and can thus function both in glycolysis and gluconeogenesis. Consistently, PPi-PFK can replace the enzymes of both the forward (ATP-PFK) and reverse (fructose-bisphosphatase (FBPase)) reactions. The protein is Pyrophosphate--fructose 6-phosphate 1-phosphotransferase of Thermotoga maritima (strain ATCC 43589 / DSM 3109 / JCM 10099 / NBRC 100826 / MSB8).